The following is a 511-amino-acid chain: Myrosinase 5 (511 aa).

The first 23 residues, 1–23 (MAIPKAHYSLAVLVLLFVVVSSS), serve as a signal peptide directing secretion. Disulfide bonds link C31–C450, C39–C445, and C230–C233. N46 and N53 each carry an N-linked (GlcNAc...) asparagine glycan. A beta-D-glucoside is bound by residues Q64, H165, and 210–211 (NQ). A glycan (N-linked (GlcNAc...) asparagine) is linked at N222. A beta-D-glucoside-binding residues include Y351 and E418. E418 serves as the catalytic Nucleophile. Residue N428 is glycosylated (N-linked (GlcNAc...) asparagine). A beta-D-glucoside is bound by residues W467, 474-475 (EF), and F483. N-linked (GlcNAc...) asparagine glycosylation is present at N489.

This sequence belongs to the glycosyl hydrolase 1 family. In terms of tissue distribution, specifically expressed in roots.

It carries out the reaction a thioglucoside + H2O = a sugar + a thiol.. The catalysed reaction is Hydrolysis of terminal, non-reducing beta-D-glucosyl residues with release of beta-D-glucose.. Functionally, hydrolyzes sinigrin and, with lower efficiency, p-nitrophenyl beta-D-glucoside. The sequence is that of Myrosinase 5 from Arabidopsis thaliana (Mouse-ear cress).